The following is a 196-amino-acid chain: Adenylyl-sulfate kinase (196 aa).

31–38 (GLSGAGKS) contacts ATP. The Phosphoserine intermediate role is filled by Ser105.

Belongs to the APS kinase family.

It carries out the reaction adenosine 5'-phosphosulfate + ATP = 3'-phosphoadenylyl sulfate + ADP + H(+). It functions in the pathway sulfur metabolism; hydrogen sulfide biosynthesis; sulfite from sulfate: step 2/3. Its function is as follows. Catalyzes the synthesis of activated sulfate. The chain is Adenylyl-sulfate kinase from Aeromonas salmonicida (strain A449).